Reading from the N-terminus, the 203-residue chain is E3 ubiquitin-protein ligase RNF152 (203 aa).

The segment at 12-55 adopts an RING-type zinc-finger fold; the sequence is CQICFNYYSPRRRPKLLDCKHTCCSVCLQQMRTSQKDVRCPWCR. Positions 106 to 165 are necessary for interaction with RRAGA; the sequence is ISKERALLPGDMGCRLLPGSQQKSVTVVTVPAEQRPLQGGAPQEAVEEEPDRRGVAKSST. A helical transmembrane segment spans residues 167-187; that stretch reads SGVCTVILVACVLVFLLGIVL.

Belongs to the RNF152 family. Interacts with RRAGA (inactive GDP-bound form); stimulated by amino acid starvation. In terms of processing, ubiquitinated. Autoubiquitinated in vitro, leading to its degradation by the proteasome.

Its subcellular location is the lysosome membrane. It catalyses the reaction S-ubiquitinyl-[E2 ubiquitin-conjugating enzyme]-L-cysteine + [acceptor protein]-L-lysine = [E2 ubiquitin-conjugating enzyme]-L-cysteine + N(6)-ubiquitinyl-[acceptor protein]-L-lysine.. Its pathway is protein modification; protein ubiquitination. Functionally, E3 ubiquitin-protein ligase that acts as a negative regulator of mTORC1 signaling by mediating ubiquitination of RagA/RRAGA and RHEB. Catalyzes 'Lys-63'-linked polyubiquitination of RagA/RRAGA in response to amino acid starvation, thereby regulating mTORC1 signaling. Also mediates monoubiquitination of RHEB, promoting its association with the TSC-TBC complex and subsequent inhibition. Also mediates 'Lys-48'-linked polyubiquitination of target proteins and their subsequent targeting to the proteasome for degradation. Induces apoptosis when overexpressed. This is E3 ubiquitin-protein ligase RNF152 from Ailuropoda melanoleuca (Giant panda).